A 312-amino-acid polypeptide reads, in one-letter code: tRNA U34 carboxymethyltransferase (312 aa).

Carboxy-S-adenosyl-L-methionine is bound by residues Lys88, Trp102, Lys107, Gly127, Asp149–Ser151, Leu177–Asp178, Met191, Tyr195, and Arg304.

This sequence belongs to the class I-like SAM-binding methyltransferase superfamily. CmoB family. Homotetramer.

The enzyme catalyses carboxy-S-adenosyl-L-methionine + 5-hydroxyuridine(34) in tRNA = 5-carboxymethoxyuridine(34) in tRNA + S-adenosyl-L-homocysteine + H(+). Its function is as follows. Catalyzes carboxymethyl transfer from carboxy-S-adenosyl-L-methionine (Cx-SAM) to 5-hydroxyuridine (ho5U) to form 5-carboxymethoxyuridine (cmo5U) at position 34 in tRNAs. This chain is tRNA U34 carboxymethyltransferase, found in Dichelobacter nodosus (strain VCS1703A).